The sequence spans 473 residues: Glutamate--tRNA ligase (473 aa).

The short motif at 9–19 (PSPTGYLHVGG) is the 'HIGH' region element. Zn(2+) is bound by residues C98, C100, C125, and D127. The 'KMSKS' region signature appears at 237 to 241 (KLSKR). ATP is bound at residue K240.

The protein belongs to the class-I aminoacyl-tRNA synthetase family. Glutamate--tRNA ligase type 1 subfamily. In terms of assembly, monomer. Requires Zn(2+) as cofactor.

Its subcellular location is the cytoplasm. It catalyses the reaction tRNA(Glu) + L-glutamate + ATP = L-glutamyl-tRNA(Glu) + AMP + diphosphate. Its function is as follows. Catalyzes the attachment of glutamate to tRNA(Glu) in a two-step reaction: glutamate is first activated by ATP to form Glu-AMP and then transferred to the acceptor end of tRNA(Glu). The chain is Glutamate--tRNA ligase from Sodalis glossinidius (strain morsitans).